The sequence spans 358 residues: Histidinol-phosphate aminotransferase (358 aa).

The residue at position 210 (Lys210) is an N6-(pyridoxal phosphate)lysine.

This sequence belongs to the class-II pyridoxal-phosphate-dependent aminotransferase family. Histidinol-phosphate aminotransferase subfamily. As to quaternary structure, homodimer. The cofactor is pyridoxal 5'-phosphate.

The catalysed reaction is L-histidinol phosphate + 2-oxoglutarate = 3-(imidazol-4-yl)-2-oxopropyl phosphate + L-glutamate. It participates in amino-acid biosynthesis; L-histidine biosynthesis; L-histidine from 5-phospho-alpha-D-ribose 1-diphosphate: step 7/9. This is Histidinol-phosphate aminotransferase from Clostridium beijerinckii (strain ATCC 51743 / NCIMB 8052) (Clostridium acetobutylicum).